Consider the following 404-residue polypeptide: Cysteine desulfurase IscS (404 aa).

Residues 75–76 (AT), Asn155, Gln183, and 203–205 (SAH) each bind pyridoxal 5'-phosphate. N6-(pyridoxal phosphate)lysine is present on Lys206. Thr243 contacts pyridoxal 5'-phosphate. Cys328 serves as the catalytic Cysteine persulfide intermediate. Cys328 provides a ligand contact to [2Fe-2S] cluster.

It belongs to the class-V pyridoxal-phosphate-dependent aminotransferase family. NifS/IscS subfamily. In terms of assembly, homodimer. Forms a heterotetramer with IscU, interacts with other sulfur acceptors. Pyridoxal 5'-phosphate is required as a cofactor.

The protein resides in the cytoplasm. The catalysed reaction is (sulfur carrier)-H + L-cysteine = (sulfur carrier)-SH + L-alanine. The protein operates within cofactor biosynthesis; iron-sulfur cluster biosynthesis. Its function is as follows. Master enzyme that delivers sulfur to a number of partners involved in Fe-S cluster assembly, tRNA modification or cofactor biosynthesis. Catalyzes the removal of elemental sulfur atoms from cysteine to produce alanine. Functions as a sulfur delivery protein for Fe-S cluster synthesis onto IscU, an Fe-S scaffold assembly protein, as well as other S acceptor proteins. The protein is Cysteine desulfurase IscS of Pseudomonas aeruginosa (strain LESB58).